The primary structure comprises 387 residues: Carboxyaminopropylagmatine decarboxylase (387 aa).

Lys52 is subject to N6-(pyridoxal phosphate)lysine.

Belongs to the Orn/Lys/Arg decarboxylase class-II family. It depends on pyridoxal 5'-phosphate as a cofactor.

The catalysed reaction is N(1)-[(S)-3-amino-3-carboxypropyl]agmatine + H(+) = N(1)-(3-aminopropyl)agmatine + CO2. Its pathway is amine and polyamine biosynthesis; spermidine biosynthesis. Its function is as follows. Decarboxylase involved in the biosynthesis of spermidine via the carboxyaminopropylagmatine (CAPA) pathway. Catalyzes the decarboxylation of CAPA to form aminopropylagmatine (APA). Can also decarboxylate carboxyspermidine and carboxynorspermidine, but not ornithine, arginine, lysine and meso-diaminopimelate. The sequence is that of Carboxyaminopropylagmatine decarboxylase from Synechocystis sp. (strain ATCC 27184 / PCC 6803 / Kazusa).